The following is a 188-amino-acid chain: Ribosome-recycling factor (188 aa).

Belongs to the RRF family.

The protein localises to the cytoplasm. In terms of biological role, responsible for the release of ribosomes from messenger RNA at the termination of protein biosynthesis. May increase the efficiency of translation by recycling ribosomes from one round of translation to another. This is Ribosome-recycling factor from Acidiphilium cryptum (strain JF-5).